A 731-amino-acid chain; its full sequence is Autophagy-related protein 20 (731 aa).

The span at 1 to 22 (MSSVLRNQDNPPTISEVSSTTK) shows a compositional bias: polar residues. The disordered stretch occupies residues 1–130 (MSSVLRNQDN…NNKSNNVSRV (130 aa)). Residues 31 to 41 (KQEEKEKEKEI) are compositionally biased toward basic and acidic residues. Positions 69–82 (SFMTANSFNEGPNT) are enriched in polar residues. Low complexity-rich tracts occupy residues 92-102 (NNNSSSNNNRG) and 113-128 (LLLY…NNVS). The region spanning 164–340 (IQITEAGNSN…KFLDPNANWG (177 aa)) is the PX domain. A 1,2-diacyl-sn-glycero-3-phospho-(1D-myo-inositol-3-phosphate) is bound by residues R205, S207, and K231. The tract at residues 253–277 (SVAGSNGNSGGSGGGGASGGAGSGS) is disordered. The segment covering 259-277 (GNSGGSGGGGASGGAGSGS) has biased composition (gly residues). R306 is an a 1,2-diacyl-sn-glycero-3-phospho-(1D-myo-inositol-3-phosphate) binding site. The tract at residues 586-626 (NSQVKPKNGKYNLEQQQSSTVSPAPPPGPPPSSSSSSSSSS) is disordered. A compositionally biased stretch (pro residues) spans 608–617 (PAPPPGPPPS).

The protein belongs to the sorting nexin family.

It localises to the endosome membrane. Its subcellular location is the preautophagosomal structure membrane. Required for cytoplasm to vacuole transport (Cvt), pexophagy and mitophagy. Also involved in endoplasmic reticulum-specific autophagic process and is essential for the survival of cells subjected to severe ER stress. Functions in protein retrieval from the endocytic pathway. The protein is Autophagy-related protein 20 (ATG20) of Candida albicans (strain SC5314 / ATCC MYA-2876) (Yeast).